Consider the following 99-residue polypeptide: Nucleoid-associated protein SAG1747 (99 aa).

The segment covering 1–10 (MMNMQNMMRQ) has biased composition (low complexity). The tract at residues 1–20 (MMNMQNMMRQAQKLQKQMEQ) is disordered.

This sequence belongs to the YbaB/EbfC family. As to quaternary structure, homodimer.

It is found in the cytoplasm. The protein localises to the nucleoid. In terms of biological role, binds to DNA and alters its conformation. May be involved in regulation of gene expression, nucleoid organization and DNA protection. In Streptococcus agalactiae serotype V (strain ATCC BAA-611 / 2603 V/R), this protein is Nucleoid-associated protein SAG1747.